We begin with the raw amino-acid sequence, 280 residues long: MLSKAHAKVNLSLDVIGKRKDGYHLLKMLMQTIDLYDLIQIKKIKKGIIIDCDREYIPKDRRNLAYKAAELFLDRYNIDSGVRIDITKNIPVAAGLAGGSTDAATVLKIMRDIFRSDISNKELKEIALDIGADVPFCIEGGTALCEGIGEKITPIKNFKNQILVLVKPNFGLSTKDVYNNLKVEKIYIHPNTTKLIQSIEEDNLKSVARNMRNVLENVTLRKYKTLNSIKSNFIELGALGSMMSGSGPSVFGLFDDMLKAQICYDNMKEKYKEVFITRTI.

Residue Lys-8 is part of the active site. 91-101 provides a ligand contact to ATP; that stretch reads PVAAGLAGGST. Asp-133 is a catalytic residue.

It belongs to the GHMP kinase family. IspE subfamily.

It carries out the reaction 4-CDP-2-C-methyl-D-erythritol + ATP = 4-CDP-2-C-methyl-D-erythritol 2-phosphate + ADP + H(+). It functions in the pathway isoprenoid biosynthesis; isopentenyl diphosphate biosynthesis via DXP pathway; isopentenyl diphosphate from 1-deoxy-D-xylulose 5-phosphate: step 3/6. Its function is as follows. Catalyzes the phosphorylation of the position 2 hydroxy group of 4-diphosphocytidyl-2C-methyl-D-erythritol. The protein is 4-diphosphocytidyl-2-C-methyl-D-erythritol kinase of Clostridium botulinum (strain Loch Maree / Type A3).